Consider the following 65-residue polypeptide: Large ribosomal subunit protein bL35 (65 aa).

Residues 1–46 (MPKIKTNRGAAKRFKPTGSGGFKRAQSHRRHILTKKSTKRKRHLRS) form a disordered region. Positions 25–45 (AQSHRRHILTKKSTKRKRHLR) are enriched in basic residues.

It belongs to the bacterial ribosomal protein bL35 family.

This is Large ribosomal subunit protein bL35 from Thioalkalivibrio sulfidiphilus (strain HL-EbGR7).